The sequence spans 284 residues: Ribose-phosphate pyrophosphokinase 1 (284 aa).

Residue Asp34 to Glu36 participates in ATP binding. His126 and Asp163 together coordinate Mg(2+). Residue Lys186 is part of the active site. D-ribose 5-phosphate is bound by residues Arg188, Asp211, and Ser215–Thr219.

The protein belongs to the ribose-phosphate pyrophosphokinase family. Class III (archaeal) subfamily. It depends on Mg(2+) as a cofactor.

It is found in the cytoplasm. It carries out the reaction D-ribose 5-phosphate + ATP = 5-phospho-alpha-D-ribose 1-diphosphate + AMP + H(+). Its pathway is metabolic intermediate biosynthesis; 5-phospho-alpha-D-ribose 1-diphosphate biosynthesis; 5-phospho-alpha-D-ribose 1-diphosphate from D-ribose 5-phosphate (route I): step 1/1. Its function is as follows. Involved in the biosynthesis of the central metabolite phospho-alpha-D-ribosyl-1-pyrophosphate (PRPP) via the transfer of pyrophosphoryl group from ATP to 1-hydroxyl of ribose-5-phosphate (Rib-5-P). The protein is Ribose-phosphate pyrophosphokinase 1 of Archaeoglobus fulgidus (strain ATCC 49558 / DSM 4304 / JCM 9628 / NBRC 100126 / VC-16).